The following is an 85-amino-acid chain: Putative membrane protein insertion efficiency factor (85 aa).

This sequence belongs to the UPF0161 family.

It is found in the cell inner membrane. Functionally, could be involved in insertion of integral membrane proteins into the membrane. This is Putative membrane protein insertion efficiency factor from Vibrio cholerae serotype O1 (strain ATCC 39315 / El Tor Inaba N16961).